The following is a 701-amino-acid chain: Polyribonucleotide nucleotidyltransferase (701 aa).

Positions 487 and 493 each coordinate Mg(2+). In terms of domain architecture, KH spans 554-613 (PTMIAMKIDTDKIRDVIGKGGATIRAICEETKASIDIEDDGSIKIFGETKEAAEAAKQRI). Residues 623–691 (GKIYVGKVER…NRGRIKLSIK (69 aa)) form the S1 motif domain.

This sequence belongs to the polyribonucleotide nucleotidyltransferase family. As to quaternary structure, component of the RNA degradosome, which is a multiprotein complex involved in RNA processing and mRNA degradation. It depends on Mg(2+) as a cofactor.

The protein localises to the cytoplasm. It catalyses the reaction RNA(n+1) + phosphate = RNA(n) + a ribonucleoside 5'-diphosphate. Functionally, involved in mRNA degradation. Catalyzes the phosphorolysis of single-stranded polyribonucleotides processively in the 3'- to 5'-direction. This Pseudomonas putida (strain GB-1) protein is Polyribonucleotide nucleotidyltransferase.